A 627-amino-acid polypeptide reads, in one-letter code: MRKFGGSLFGVSLLLSVLLAAATAAAEYYNYGSALDKTFLFFEAQRSGKLPAAQRVKWRGPSGLKDGLAQGVSLEGGYYDAGDHVKFGLPMAFAVTMLSWAAVDNRKELSSSNQMQQTLWSIRWGTDYFIKAHPQPNVLWGQVGDGESDHYCWERPEDMTTSRTAYKLDPYHPGSDLAGETAAALAAASLAFKPFNSSYSALLLSHAKELFSFADKYRGLYTNSIPNAKAFYMSSGYSDELLWAAAWLHRATGDQYYLKYAMDNSGYMGGTGWGVKEFSWDNKYAGVQILLSKILLEGKGGIYTSTLKQYQTKADYFACACLKKNGGYNIQTTPGGLMYVREWNNLQYASAAAYLLAVYSDYLSAANAKLNCPDGLVQPQGLLDFARSQADYILGKNRQGMSYVVGYGPKYPIRVHHRGSSIPSIFAQRSSVSCVQGFDSWYRRSQGDPNVIYGALVGGPDENDNYSDDRSNYEQSEPTLSGTAPLVGLFAKLYGGSLGSYGGGSYKPYETTKPAASSYKATPTTYSPKQSGAQIEFLHSITSNWIAGNTRYYRHKVIIKNNSQKPISDLKLKIEDLSGPIWGLNPTGQKYTYQLPQWQKTLRAGQAYDFVYVQGGPQAKVSVLSYN.

The first 26 residues, 1 to 26 (MRKFGGSLFGVSLLLSVLLAAATAAA), serve as a signal peptide directing secretion. Catalysis depends on Asp-83, which acts as the Nucleophile. Asn-196 carries N-linked (GlcNAc...) asparagine glycosylation. His-416 is an active-site residue. An N-linked (GlcNAc...) asparagine glycan is attached at Asn-465. Catalysis depends on residues Asp-468 and Glu-477. Residue Asn-561 is glycosylated (N-linked (GlcNAc...) asparagine).

The protein belongs to the glycosyl hydrolase 9 (cellulase E) family.

The protein resides in the secreted. The enzyme catalyses Endohydrolysis of (1-&gt;4)-beta-D-glucosidic linkages in cellulose, lichenin and cereal beta-D-glucans.. This is Endoglucanase 5 from Arabidopsis thaliana (Mouse-ear cress).